Consider the following 391-residue polypeptide: S-adenosylmethionine synthase (391 aa).

H14 serves as a coordination point for ATP. D16 serves as a coordination point for Mg(2+). Residue E42 participates in K(+) binding. Positions 55 and 98 each coordinate L-methionine. Residues 98–108 form a flexible loop region; the sequence is QSVDIAMGVDE. ATP is bound by residues 172-174, 238-239, D247, 253-254, A270, and K274; these read DGK, RF, and RK. Position 247 (D247) interacts with L-methionine. K278 contributes to the L-methionine binding site.

The protein belongs to the AdoMet synthase family. In terms of assembly, homotetramer; dimer of dimers. Mg(2+) is required as a cofactor. The cofactor is K(+).

The protein localises to the cytoplasm. The enzyme catalyses L-methionine + ATP + H2O = S-adenosyl-L-methionine + phosphate + diphosphate. Its pathway is amino-acid biosynthesis; S-adenosyl-L-methionine biosynthesis; S-adenosyl-L-methionine from L-methionine: step 1/1. In terms of biological role, catalyzes the formation of S-adenosylmethionine (AdoMet) from methionine and ATP. The overall synthetic reaction is composed of two sequential steps, AdoMet formation and the subsequent tripolyphosphate hydrolysis which occurs prior to release of AdoMet from the enzyme. This is S-adenosylmethionine synthase from Clostridium botulinum (strain Hall / ATCC 3502 / NCTC 13319 / Type A).